We begin with the raw amino-acid sequence, 217 residues long: Large ribosomal subunit protein uL3 (217 aa).

The protein belongs to the universal ribosomal protein uL3 family. Part of the 50S ribosomal subunit. Forms a cluster with proteins L14 and L19.

Its function is as follows. One of the primary rRNA binding proteins, it binds directly near the 3'-end of the 23S rRNA, where it nucleates assembly of the 50S subunit. The sequence is that of Large ribosomal subunit protein uL3 from Mycolicibacterium paratuberculosis (strain ATCC BAA-968 / K-10) (Mycobacterium paratuberculosis).